An 805-amino-acid chain; its full sequence is H(+)/Cl(-) exchange transporter 7 (805 aa).

Positions 1–49 (MANVSKKVSWSGRDRDDEEAAPLLRRTARPGGGTPLLNGAGPGAARQSP) are disordered. The Cytoplasmic portion of the chain corresponds to 1-126 (MANVSKKVSW…TAFRTVEIKR (126 aa)). 2 positions are modified to phosphoserine: S9 and S60. The next 2 helical transmembrane spans lie at 127-159 (WVIC…YRVI) and 174-197 (FSLL…VAFI). A Selectivity filter part_1 motif is present at residues 203–207 (GSGIP). S204 contributes to the chloride binding site. The segment at residues 206–213 (IPQIKCFL) is an intramembrane region (helical). The next 2 helical transmembrane spans lie at 223 to 241 (RLKT…VVGG) and 247 to 264 (EGPM…ISQG). Positions 245-249 (GKEGP) match the Selectivity filter part_2 motif. 2 consecutive intramembrane regions (helical) follow at residues 288-300 (FVSA…VSAA) and 304-312 (PVGGVLFSL). The next 5 membrane-spanning stretches (helical) occupy residues 322–341 (FLTW…LNFV), 375–405 (IPVF…FRIR), 410–432 (PCLQ…FVLI), 487–507 (PLTL…TYGL), and 512–535 (GVFI…LSYL). Positions 512–516 (GVFIP) match the Selectivity filter part_3 motif. Residue F514 participates in chloride binding. Residues 545–559 (GKYALMGAAAQLGGI) constitute an intramembrane region (helical). Residues 560 to 562 (VRM) constitute an intramembrane region (note=Loop between two helices). Positions 563–574 (TLSLTVIMMEAT) form an intramembrane region, helical. An intramembrane region (note=Loop between two helices) is located at residues 575-578 (SNVT). The helical transmembrane segment at 579 to 597 (YGFPIMLVLMTAKIVGDVF) threads the bilayer. Topologically, residues 598–805 (IEGLYDMHIQ…GLEELSLAQT (208 aa)) are cytoplasmic. Position 602 (Y602) interacts with chloride. 2 CBS domains span residues 631-695 (MSTP…VFVE) and 741-799 (MNPS…GLEE). ATP is bound by residues 658–660 (HNG) and 783–786 (TRKD). Phosphoserine is present on S801.

Belongs to the chloride channel (TC 2.A.49) family. ClC-7/CLCN7 subfamily. In terms of assembly, chloride channel 7 are heteromers of alpha (CLCN7) and beta (OSTM1) subunits. Brain and kidney.

The protein localises to the lysosome membrane. It carries out the reaction 2 chloride(in) + H(+)(out) = 2 chloride(out) + H(+)(in). Its function is as follows. Slowly voltage-gated channel mediating the exchange of chloride ions against protons. Functions as antiporter and contributes to the acidification of the lysosome lumen and may be involved in maintaining lysosomal pH. The CLC channel family contains both chloride channels and proton-coupled anion transporters that exchange chloride or another anion for protons. The presence of conserved gating glutamate residues is typical for family members that function as antiporters. The protein is H(+)/Cl(-) exchange transporter 7 of Homo sapiens (Human).